The chain runs to 593 residues: DNA mismatch repair protein MutL (593 aa).

It belongs to the DNA mismatch repair MutL/HexB family.

Functionally, this protein is involved in the repair of mismatches in DNA. It is required for dam-dependent methyl-directed DNA mismatch repair. May act as a 'molecular matchmaker', a protein that promotes the formation of a stable complex between two or more DNA-binding proteins in an ATP-dependent manner without itself being part of a final effector complex. In Leptospira interrogans serogroup Icterohaemorrhagiae serovar copenhageni (strain Fiocruz L1-130), this protein is DNA mismatch repair protein MutL.